Reading from the N-terminus, the 142-residue chain is MYNKKYVIPLILVFLIGFFTPYWYNAMAGTLGHVPTLKEPAGNCVEDKDWMAANHMLLLQQWRTQAIRHGAEGGGIYHSFTTGEEYHASTNTCWSCHDSKEEFCDQCHDYVGIHPECWDCHYTPSVEKPHYSGIEELSKYFS.

Residues 1 to 6 (MYNKKY) lie on the Cytoplasmic side of the membrane. A helical membrane pass occupies residues 7-27 (VIPLILVFLIGFFTPYWYNAM). The Extracellular portion of the chain corresponds to 28 to 142 (AGTLGHVPTL…GIEELSKYFS (115 aa)). Residues cysteine 93, cysteine 96, histidine 97, cysteine 104, cysteine 107, histidine 108, cysteine 117, cysteine 120, and histidine 121 each coordinate heme.

In terms of assembly, consists of five subunits: an integral membrane subunit, a cytochrome b-like subunit, a cytochrome c subunit and two iron-sulfur subunits. Post-translationally, binds 3 heme groups per subunit.

The protein localises to the cell membrane. Its function is as follows. Has menaquinol-oxidizing activity. HmeA, HmeB and HmeE subunits may together catalyze electron transfer from menaquinol to cytochrome c. This is Hdr-like menaquinol oxidoreductase cytochrome c subunit (hmeE) from Archaeoglobus fulgidus (strain ATCC 49558 / DSM 4304 / JCM 9628 / NBRC 100126 / VC-16).